A 298-amino-acid chain; its full sequence is tRNA dimethylallyltransferase (298 aa).

Position 10–17 (10–17 (GATATGKS)) interacts with ATP. Residue 12 to 17 (TATGKS) participates in substrate binding. An interaction with substrate tRNA region spans residues 35 to 38 (DSRQ).

This sequence belongs to the IPP transferase family. Monomer. Mg(2+) is required as a cofactor.

It catalyses the reaction adenosine(37) in tRNA + dimethylallyl diphosphate = N(6)-dimethylallyladenosine(37) in tRNA + diphosphate. In terms of biological role, catalyzes the transfer of a dimethylallyl group onto the adenine at position 37 in tRNAs that read codons beginning with uridine, leading to the formation of N6-(dimethylallyl)adenosine (i(6)A). In Picosynechococcus sp. (strain ATCC 27264 / PCC 7002 / PR-6) (Agmenellum quadruplicatum), this protein is tRNA dimethylallyltransferase.